Here is a 376-residue protein sequence, read N- to C-terminus: Actin, cytoplasmic (376 aa).

It belongs to the actin family.

Its subcellular location is the cytoplasm. It is found in the cytoskeleton. It catalyses the reaction ATP + H2O = ADP + phosphate + H(+). Actins are highly conserved proteins that are involved in various types of cell motility and are ubiquitously expressed in all eukaryotic cells. In Tetrahymena pyriformis, this protein is Actin, cytoplasmic.